Reading from the N-terminus, the 119-residue chain is Immunoglobulin heavy variable 2-70D (119 aa).

Residues 1–19 (MDILCSTLLLLTVPSWVLS) form the signal peptide. Gln20 carries the pyrrolidone carboxylic acid modification. Residues 20–44 (QVTLKESGPALVKPTQTLTLTCTFS) are framework-1. The 100-residue stretch at 20–119 (QVTLKESGPA…DTATYYCARI (100 aa)) folds into the Ig-like domain. Cysteines 41 and 116 form a disulfide. Residues 45–54 (GFSLSTSGMR) are complementarity-determining-1. Positions 55–71 (VSWIRQPPGKALEWLAR) are framework-2. Residues 72 to 78 (IDWDDDK) form a complementarity-determining-2 region. A framework-3 region spans residues 79-116 (FYSTSLKTRLTISKDTSKNQVVLTMTNMDPVDTATYYC). The complementarity-determining-3 stretch occupies residues 117–119 (ARI).

Immunoglobulins are composed of two identical heavy chains and two identical light chains; disulfide-linked.

Its subcellular location is the secreted. The protein localises to the cell membrane. Its function is as follows. V region of the variable domain of immunoglobulin heavy chains that participates in the antigen recognition. Immunoglobulins, also known as antibodies, are membrane-bound or secreted glycoproteins produced by B lymphocytes. In the recognition phase of humoral immunity, the membrane-bound immunoglobulins serve as receptors which, upon binding of a specific antigen, trigger the clonal expansion and differentiation of B lymphocytes into immunoglobulins-secreting plasma cells. Secreted immunoglobulins mediate the effector phase of humoral immunity, which results in the elimination of bound antigens. The antigen binding site is formed by the variable domain of one heavy chain, together with that of its associated light chain. Thus, each immunoglobulin has two antigen binding sites with remarkable affinity for a particular antigen. The variable domains are assembled by a process called V-(D)-J rearrangement and can then be subjected to somatic hypermutations which, after exposure to antigen and selection, allow affinity maturation for a particular antigen. This is Immunoglobulin heavy variable 2-70D from Homo sapiens (Human).